A 480-amino-acid chain; its full sequence is Acyl-lipid (8-3)-desaturase (480 aa).

The segment at 1–30 (MAPHSADTAGLVPSDELRLRTSNSKGPEQE) is disordered. In terms of domain architecture, Cytochrome b5 heme-binding spans 33-107 (LKKYTLEDVS…LAKYCIGELV (75 aa)). Residues His-68 and His-90 each coordinate heme. The next 2 helical transmembrane spans lie at 151–171 (IHPH…ASYY) and 173–193 (AFFW…MGFF). The short motif at 203–207 (HDGNH) is the Histidine box-1 element. The Histidine box-2 motif lies at 238 to 243 (HVVGHH). The next 3 helical transmembrane spans lie at 280–300 (IYLA…DDFL), 322–342 (IFFQ…SVYG), and 348–368 (TFLA…AFLF). Positions 419 to 423 (QIEHH) match the Histidine box-3 motif.

The protein belongs to the fatty acid desaturase type 1 family. The cofactor is Fe(2+).

The protein localises to the membrane. It carries out the reaction an (8Z,11Z,14Z)-icosatrienoyl-containing glycerolipid + 2 Fe(II)-[cytochrome b5] + O2 + 2 H(+) = (5Z,8Z,11Z,14Z)-eicosatetraenoyl-containing glycerolipid + 2 Fe(III)-[cytochrome b5] + 2 H2O. It catalyses the reaction an (8Z,11Z,14Z,17Z)-eicosatetraenoyl-containing glycerolipid + 2 Fe(II)-[cytochrome b5] + O2 + 2 H(+) = a (5Z,8Z,11Z,14Z,17Z)-eicosapentaenoyl-containing glycerolipid + 2 Fe(III)-[cytochrome b5] + 2 H2O. Its function is as follows. Fatty acid desaturase that introduces a cis double bond at the 5-position in 20-carbon polyunsaturated fatty acids incorporated in a glycerolipid that contain a Delta(8) double bond. In Physcomitrium patens (Spreading-leaved earth moss), this protein is Acyl-lipid (8-3)-desaturase.